A 287-amino-acid chain; its full sequence is RNA polymerase sigma factor RpoH (287 aa).

The interval 54 to 123 (LILSHLRFVI…IHEYVLRNWR (70 aa)) is sigma-70 factor domain-2. The short motif at 78 to 81 (DLIQ) is the Interaction with polymerase core subunit RpoC element. A sigma-70 factor domain-4 region spans residues 230–283 (ALSSLDERSRNIIHARWLDDSDHKMTLREIAHNYGISAERVRQLEKNAMKKLKV). Residues 256-275 (LREIAHNYGISAERVRQLEK) constitute a DNA-binding region (H-T-H motif).

The protein belongs to the sigma-70 factor family. RpoH subfamily. In terms of assembly, interacts with the RNA polymerase core enzyme.

The protein resides in the cytoplasm. Functionally, sigma factors are initiation factors that promote the attachment of RNA polymerase to specific initiation sites and are then released. This sigma factor is involved in regulation of expression of heat shock genes. This Buchnera aphidicola subsp. Baizongia pistaciae (strain Bp) protein is RNA polymerase sigma factor RpoH.